A 434-amino-acid polypeptide reads, in one-letter code: Nicotinate phosphoribosyltransferase (434 aa).

H242 is modified (phosphohistidine; by autocatalysis).

This sequence belongs to the NAPRTase family. In terms of processing, transiently phosphorylated on a His residue during the reaction cycle. Phosphorylation strongly increases the affinity for substrates and increases the rate of nicotinate D-ribonucleotide production. Dephosphorylation regenerates the low-affinity form of the enzyme, leading to product release.

The enzyme catalyses nicotinate + 5-phospho-alpha-D-ribose 1-diphosphate + ATP + H2O = nicotinate beta-D-ribonucleotide + ADP + phosphate + diphosphate. The protein operates within cofactor biosynthesis; NAD(+) biosynthesis; nicotinate D-ribonucleotide from nicotinate: step 1/1. Catalyzes the synthesis of beta-nicotinate D-ribonucleotide from nicotinate and 5-phospho-D-ribose 1-phosphate at the expense of ATP. This chain is Nicotinate phosphoribosyltransferase, found in Sinorhizobium fredii (strain NBRC 101917 / NGR234).